The sequence spans 726 residues: PWWP domain-containing protein 2 (726 aa).

Residues 1 to 10 show a composition bias toward basic and acidic residues; the sequence is MSTESERIES. Residues 1–26 are disordered; the sequence is MSTESERIESVSEANASSLEVGNDQM. Residues 12–26 show a composition bias toward polar residues; sequence SEANASSLEVGNDQM. In terms of domain architecture, PWWP spans 199–260; that stretch reads DSDLVWAKVR…ASRIKPFRQH (62 aa). Residues 392–441 are disordered; it reads APKISPAEEQSSLVEVSDPEPTKSKQVYTKRRKTNLQTEQSSLVEVSDPD. Positions 426-435 are enriched in polar residues; the sequence is NLQTEQSSLV. 2 short sequence motifs (nuclear localization signal) span residues 460–467 and 495–502; these read KKKEKTLA and KKRKVVQS. Disordered regions lie at residues 472–545 and 568–726; these read EKRV…PQKA and TRLL…VSAE. Over residues 494–512 the composition is skewed to basic residues; it reads EKKRKVVQSKVPKSTKKIK. A compositionally biased stretch (polar residues) spans 606-634; it reads SPSTTLSSPHAASVTKTTSGKSNSVSLDH. A compositionally biased stretch (basic and acidic residues) spans 658-688; it reads LESRDLKDSSKEQVVHEDKKEAANVADEKSI.

It belongs to the PDP family. Interacts with DEK3. Binds to MSI4/FVE and MSI5. Component of the PRC2 (polycomb repressive complex 2) complex which regulates histone methylation on histone H3K27.

The protein resides in the nucleus. Functionally, together with PDP1, PDP3 and PDP6, interacts with MSI4/FVE and MSI5 to suppress FLC, MAF4 and MAF5 expression by regulating the function of the PRC2 complex and modulating H3K27me3 level, thereby promoting flowering. This chain is PWWP domain-containing protein 2, found in Arabidopsis thaliana (Mouse-ear cress).